A 254-amino-acid chain; its full sequence is rRNA-processing protein UTP23 (254 aa).

Residues 172 to 254 form a disordered region; sequence NDPNIEKLQE…PVSNGTTAAQ (83 aa). Composition is skewed to basic and acidic residues over residues 175–192 and 218–228; these read NIEK…ESIT and DEVKDKEDTSK. S182 carries the post-translational modification Phosphoserine. Basic residues predominate over residues 229 to 240; the sequence is EKKKRRRRKHKS. Over residues 241-254 the composition is skewed to polar residues; it reads NTNVPVSNGTTAAQ.

The protein belongs to the UTP23/FCF1 family. UTP23 subfamily.

It localises to the mitochondrion. It is found in the nucleus. The protein localises to the nucleolus. Its function is as follows. Involved in rRNA-processing and ribosome biogenesis. The protein is rRNA-processing protein UTP23 (UTP23) of Saccharomyces cerevisiae (strain ATCC 204508 / S288c) (Baker's yeast).